We begin with the raw amino-acid sequence, 210 residues long: Protein GrpE (210 aa).

Basic and acidic residues predominate over residues methionine 1–serine 12. 2 disordered regions span residues methionine 1 to glycine 26 and isoleucine 191 to alanine 210.

Belongs to the GrpE family. As to quaternary structure, homodimer.

Its subcellular location is the cytoplasm. Functionally, participates actively in the response to hyperosmotic and heat shock by preventing the aggregation of stress-denatured proteins, in association with DnaK and GrpE. It is the nucleotide exchange factor for DnaK and may function as a thermosensor. Unfolded proteins bind initially to DnaJ; upon interaction with the DnaJ-bound protein, DnaK hydrolyzes its bound ATP, resulting in the formation of a stable complex. GrpE releases ADP from DnaK; ATP binding to DnaK triggers the release of the substrate protein, thus completing the reaction cycle. Several rounds of ATP-dependent interactions between DnaJ, DnaK and GrpE are required for fully efficient folding. The protein is Protein GrpE of Mesorhizobium japonicum (strain LMG 29417 / CECT 9101 / MAFF 303099) (Mesorhizobium loti (strain MAFF 303099)).